The primary structure comprises 445 residues: Proline--tRNA ligase (445 aa).

Belongs to the class-II aminoacyl-tRNA synthetase family. ProS type 2 subfamily. In terms of assembly, homodimer.

Its subcellular location is the cytoplasm. The catalysed reaction is tRNA(Pro) + L-proline + ATP = L-prolyl-tRNA(Pro) + AMP + diphosphate. Functionally, catalyzes the attachment of proline to tRNA(Pro) in a two-step reaction: proline is first activated by ATP to form Pro-AMP and then transferred to the acceptor end of tRNA(Pro). In Caulobacter sp. (strain K31), this protein is Proline--tRNA ligase.